The primary structure comprises 131 residues: Large-conductance mechanosensitive channel (131 aa).

3 helical membrane passes run 8-28 (FAIR…GAFG), 30-50 (IVSS…LGGI), and 67-87 (GAFI…FLFV).

The protein belongs to the MscL family. As to quaternary structure, homopentamer.

It localises to the cell membrane. In terms of biological role, channel that opens in response to stretch forces in the membrane lipid bilayer. May participate in the regulation of osmotic pressure changes within the cell. The sequence is that of Large-conductance mechanosensitive channel from Geobacillus thermodenitrificans (strain NG80-2).